We begin with the raw amino-acid sequence, 254 residues long: Capsid protein (254 aa).

Residues 9 to 35 (VYSRKRGRYGKTYQALGVKSQRELEQL) carry the Bipartite nuclear localization signal motif.

The protein belongs to the geminiviridae capsid protein family. In terms of assembly, homomultimer. Interacts with the movement protein. Binds to single-stranded and double-stranded viral DNA.

It localises to the virion. Its subcellular location is the host nucleus. Its function is as follows. Encapsidates the viral genome into characteristic twinned ('geminate') particles. Binds the genomic viral ssDNA and shuttles it into and out of the cell nucleus. Plays a role in protection of the genome from degradation, virus acquisition and transmission by insect vectors, infectivity, and systemic movement. The CP of monopartite geminiviruses is absolutely essential for virus movement. The chain is Capsid protein from Tobacco yellow dwarf virus (strain Australia) (TYDV).